A 221-amino-acid chain; its full sequence is UPF0502 protein VSAL_II0605 (221 aa).

It belongs to the UPF0502 family.

The chain is UPF0502 protein VSAL_II0605 from Aliivibrio salmonicida (strain LFI1238) (Vibrio salmonicida (strain LFI1238)).